Here is a 475-residue protein sequence, read N- to C-terminus: Argininosuccinate lyase (475 aa).

The protein belongs to the lyase 1 family. Argininosuccinate lyase subfamily.

It localises to the cytoplasm. It carries out the reaction 2-(N(omega)-L-arginino)succinate = fumarate + L-arginine. Its pathway is amino-acid biosynthesis; L-arginine biosynthesis; L-arginine from L-ornithine and carbamoyl phosphate: step 3/3. The polypeptide is Argininosuccinate lyase (Streptomyces coelicolor (strain ATCC BAA-471 / A3(2) / M145)).